Here is a 659-residue protein sequence, read N- to C-terminus: RNA-binding E3 ubiquitin-protein ligase MEX3C (659 aa).

Low complexity predominate over residues M1 to P15. The interval M1 to S140 is disordered. A compositionally biased stretch (pro residues) spans A16 to G37. A compositionally biased stretch (low complexity) spans E64–R82. Residues R83–P94 are compositionally biased toward basic and acidic residues. S88 carries the post-translational modification Phosphoserine. Residues A104–D137 show a composition bias toward acidic residues. KH domains follow at residues T232 to I293 and Q326 to I387. A disordered region spans residues F513–N569. Residues P526–L544 are compositionally biased toward polar residues. A phosphoserine mark is found at S537 and S545. Residues S551–S562 show a composition bias toward basic and acidic residues. The RING-type zinc-finger motif lies at C608–Q648.

Interacts with USP7, which antagonizes the ability to degrade mRNA. In terms of tissue distribution, highest levels found in fetal brain and testis. Also expressed in thymus, salivary gland and uterus. Highly expressed in cells of the innate immune system, in particular activated NK cells. Week expression in the intestine.

It is found in the cytoplasm. It localises to the nucleus. It carries out the reaction S-ubiquitinyl-[E2 ubiquitin-conjugating enzyme]-L-cysteine + [acceptor protein]-L-lysine = [E2 ubiquitin-conjugating enzyme]-L-cysteine + N(6)-ubiquitinyl-[acceptor protein]-L-lysine.. Functionally, E3 ubiquitin ligase responsible for the post-transcriptional regulation of common HLA-A allotypes. Binds to the 3' UTR of HLA-A2 mRNA, and regulates its levels by promoting mRNA decay. RNA binding is sufficient to prevent translation, but ubiquitin ligase activity is required for mRNA degradation. This chain is RNA-binding E3 ubiquitin-protein ligase MEX3C (MEX3C), found in Homo sapiens (Human).